We begin with the raw amino-acid sequence, 110 residues long: KLSKELSRRATGKTLYILDEPTTGLHFEDVRKLLEVLHSLVDQGNTVVVIEHNLDVIKTADWIIDIGPEGGDGGGAIVATGTPEQVAEVPESHTGRYLAPMLDAARSAAE.

This sequence belongs to the ABC transporter superfamily. UvrA family. In terms of assembly, forms a heterotetramer with UvrB during the search for lesions.

It is found in the cytoplasm. Its function is as follows. The UvrABC repair system catalyzes the recognition and processing of DNA lesions. UvrA is an ATPase and a DNA-binding protein. A damage recognition complex composed of 2 UvrA and 2 UvrB subunits scans DNA for abnormalities. When the presence of a lesion has been verified by UvrB, the UvrA molecules dissociate. This Paracoccus denitrificans protein is UvrABC system protein A (uvrA).